The primary structure comprises 1065 residues: RNA2 polyprotein (1065 aa).

As to quaternary structure, interacts with the large capsid protein. Interacts with the movement protein (via C-terminus). Interacts with the small capsid protein. Homomultimer; assembles as pentons. In terms of assembly, interacts (via C-terminus) with the small capsid protein. In terms of processing, specific enzymatic cleavages by picornain 3C-like protease in vivo yield mature proteins.

It localises to the host endoplasmic reticulum. It is found in the host cell junction. The protein localises to the host plasmodesma. The protein resides in the virion. Its function is as follows. Acts as a suppressor of post-transcriptional gene silencing (PTGS), a mechanism of plant viral defense that limits the accumulation of viral RNAs. Binds ssRNA. Transports the viral genome to neighboring plant cells directly through plasmosdesmata, without any budding. The movement protein allows efficient cell to cell propagation, by bypassing the host cell wall barrier. Acts by forming a tubular structure at the host plasmodesmata, enlarging it enough to allow free passage of virion capsids. Binds to GTP and to single-stranded RNA and single-stranded DNA in a non-sequence-specific manner. Also acts as a suppressor of post-transcriptional gene silencing (PTGS), a mechanism of plant viral defense that limits the accumulation of viral RNAs. In terms of biological role, together with the small capsid protein, forms an icosahedral capsid (T=3) enclosing the viral positive strand RNA genome, with a diameter of approximately 300 Angstroms. The large capsid protein interacts with the viral RNA. Also acts as a suppressor of post-transcriptional gene silencing (PTGS), a mechanism of plant viral defense that limits the accumulation of viral RNAs. Binds ssRNA. Functionally, together with the large capsid protein, forms an icosahedral capsid (T=3) enclosing the viral positive strand RNA genome, with a diameter of approximately 300 Angstroms. The capsid is formed from 60 copies each of the large and the small capsid protein. The small capsid protein forms the turrets at the fivefold axes of the viral particle. The protein is RNA2 polyprotein of Broad bean wilt virus 2 (BBWV-2).